A 124-amino-acid chain; its full sequence is Calvin cycle protein CP12-1, chloroplastic (124 aa).

The transit peptide at Met-1–Ala-47 directs the protein to the chloroplast. Disulfide bonds link Cys-68–Cys-77 and Cys-110–Cys-119. A disordered region spans residues Ala-90–Asn-124. Acidic residues predominate over residues Pro-105 to Thr-116.

It belongs to the CP12 family. In terms of assembly, monomer. Component of a complex that contains two dimers of PRK, two tetramers of GAPDH and CP12. CP12 associates with GAPDH, causing its conformation to change. This GAPDH/CP12 complex binds PRK to form a half-complex (one unit). This unit probably dimerizes due partially to interactions between the enzymes of each unit. Contains two disulfide bonds; only the oxidized protein, with two disulfide bonds, is active in complex formation. The C-terminal disulfide is involved in the interaction with GAPDH and the N-terminal disulfide mediates the binding of PRK with this binary complex. As to expression, mostly expressed in flowers, hypocotyl, cotyledons, leaves, stems, and flower stalks. Barely detectable in roots and siliques. Present in root tips and lateral roots. Accumulates in the cotyledons of etiolated seedlings.

The protein localises to the plastid. It localises to the chloroplast. Acts as a linker essential in the assembly of a core complex of PRK/GAPDH. Coordinates the reversible inactivation of chloroplast enzymes GAPDH and PRK during darkness in photosynthetic tissues. The sequence is that of Calvin cycle protein CP12-1, chloroplastic (CP12-1) from Arabidopsis thaliana (Mouse-ear cress).